A 591-amino-acid polypeptide reads, in one-letter code: Aspartate--tRNA(Asp/Asn) ligase (591 aa).

Glu176 serves as a coordination point for L-aspartate. Residues 200-203 are aspartate; the sequence is QLFK. Arg222 provides a ligand contact to L-aspartate. ATP is bound by residues 222–224 and Gln231; that span reads RDE. His450 is a binding site for L-aspartate. Glu484 is an ATP binding site. Arg491 contacts L-aspartate. Residue 536-539 participates in ATP binding; it reads GLDR.

The protein belongs to the class-II aminoacyl-tRNA synthetase family. Type 1 subfamily. Homodimer.

The protein localises to the cytoplasm. The enzyme catalyses tRNA(Asx) + L-aspartate + ATP = L-aspartyl-tRNA(Asx) + AMP + diphosphate. Functionally, aspartyl-tRNA synthetase with relaxed tRNA specificity since it is able to aspartylate not only its cognate tRNA(Asp) but also tRNA(Asn). Reaction proceeds in two steps: L-aspartate is first activated by ATP to form Asp-AMP and then transferred to the acceptor end of tRNA(Asp/Asn). The polypeptide is Aspartate--tRNA(Asp/Asn) ligase (Bacillus cereus (strain ATCC 14579 / DSM 31 / CCUG 7414 / JCM 2152 / NBRC 15305 / NCIMB 9373 / NCTC 2599 / NRRL B-3711)).